The primary structure comprises 159 residues: Phosphopantetheine adenylyltransferase (159 aa).

A substrate-binding site is contributed by Ser-9. ATP contacts are provided by residues 9-10 (SF) and His-17. Substrate is bound by residues Lys-41, Leu-74, and Lys-88. Residues 89–91 (GLR), Glu-99, and 123–129 (YLHLSST) each bind ATP.

This sequence belongs to the bacterial CoaD family. Homohexamer. It depends on Mg(2+) as a cofactor.

The protein localises to the cytoplasm. The catalysed reaction is (R)-4'-phosphopantetheine + ATP + H(+) = 3'-dephospho-CoA + diphosphate. Its pathway is cofactor biosynthesis; coenzyme A biosynthesis; CoA from (R)-pantothenate: step 4/5. In terms of biological role, reversibly transfers an adenylyl group from ATP to 4'-phosphopantetheine, yielding dephospho-CoA (dPCoA) and pyrophosphate. This Arthrobacter sp. (strain FB24) protein is Phosphopantetheine adenylyltransferase.